The sequence spans 352 residues: Replication factor C subunit 5 (352 aa).

It belongs to the activator 1 small subunits family. Heteropentamer of subunits rfc1, rfc2, rfc3, rfc4 and rfc5 that forms a complex with PCNA in the presence of ATP.

It localises to the nucleus. The elongation of primed DNA templates by DNA polymerase delta and epsilon requires the action of the accessory proteins proliferating cell nuclear antigen (PCNA) and activator 1. In Neurospora crassa (strain ATCC 24698 / 74-OR23-1A / CBS 708.71 / DSM 1257 / FGSC 987), this protein is Replication factor C subunit 5.